The chain runs to 257 residues: Glucose-1-phosphate cytidylyltransferase (257 aa).

Substrate is bound by residues 6–10, 11–13, K23, S104, R109, and G128; these read LAGGL and GTR. D129 and D234 together coordinate Mg(2+).

Belongs to the glucose-1-phosphate cytidylyltransferase family. Homohexamer. Mg(2+) is required as a cofactor.

The enzyme catalyses alpha-D-glucose 1-phosphate + CTP + H(+) = CDP-D-glucose + diphosphate. Its pathway is nucleotide-sugar biosynthesis; CDP-3,6-dideoxy-D-mannose biosynthesis; CDP-3,6-dideoxy-D-mannose from CTP and alpha-D-glucose 1-phosphate: step 1/5. It functions in the pathway bacterial outer membrane biogenesis; LPS O-antigen biosynthesis. Involved in the biosynthesis of the tyvelose, a 3,6-dideoxyhexose found in the O-antigen of the surface lipopolysaccharides. It catalyzes the transfer of a CMP moiety from CTP to glucose 1-phosphate. This Salmonella typhimurium (strain LT2 / SGSC1412 / ATCC 700720) protein is Glucose-1-phosphate cytidylyltransferase (rfbF).